The following is a 391-amino-acid chain: Acetylgalactosaminyl-O-glycosyl-glycoprotein beta-1,3-N-acetylglucosaminyltransferase (391 aa).

The Cytoplasmic segment spans residues 1-11 (MALPSSRRFKS). A helical; Signal-anchor for type II membrane protein membrane pass occupies residues 12 to 32 (PTTLAFFLVGVTLVVLNQWFL). Over 33-391 (QEHRQEKAKG…TAGEQNPDAH (359 aa)) the chain is Lumenal. 2 N-linked (GlcNAc...) asparagine glycosylation sites follow: Asn68 and Asn191.

It belongs to the glycosyltransferase 31 family.

The protein resides in the golgi apparatus membrane. The enzyme catalyses a 3-O-[N-acetyl-alpha-D-galactosaminyl]-L-threonyl-[protein] + UDP-N-acetyl-alpha-D-glucosamine = a 3-O-[N-acetyl-beta-D-glucosaminyl-(1-&gt;3)-N-acetyl-alpha-D-galactosaminyl]-L-threonyl-[protein] + UDP + H(+). It carries out the reaction a 3-O-[N-acetyl-alpha-D-galactosaminyl]-L-seryl-[protein] + UDP-N-acetyl-alpha-D-glucosamine = 3-O-[N-acetyl-beta-D-glucosaminyl-(1-&gt;3)-N-acetyl-alpha-D-galactosaminyl]-L-seryl-[protein] + UDP + H(+). It functions in the pathway protein modification; protein glycosylation. Beta-1,3-N-acetylglucosaminyltransferase that synthesizes the core 3 structure of the O-glycan, an important precursor in the biosynthesis of mucin-type glycoproteins. Plays an important role in the synthesis of mucin-type O-glycans in digestive organs. This Mus musculus (Mouse) protein is Acetylgalactosaminyl-O-glycosyl-glycoprotein beta-1,3-N-acetylglucosaminyltransferase (B3gnt6).